A 438-amino-acid chain; its full sequence is Battenin (438 aa).

A disordered region spans residues 1–27 (MGSSAGSWRRLEDSEREETDSEPQAPR). Residues 1 to 37 (MGSSAGSWRRLEDSEREETDSEPQAPRLDSRSVLWKN) are Cytoplasmic-facing. Position 14 is a phosphoserine (S14). The chain crosses the membrane as a helical span at residues 38–58 (AVGFWILGLCNNFSYVVMLSA). Over 59–127 (AHDILKQEQA…GLHLLPYSPR (69 aa)) the chain is Lumenal. Positions 67-87 (QASGNQSHVEPGPTPTPHNSS) are disordered. 2 N-linked (GlcNAc...) asparagine glycosylation sites follow: N71 and N85. Residues 128–148 (VLVSGVCSAGSFVLVAFSQSV) traverse the membrane as a helical segment. Residues 149–151 (GLS) lie on the Cytoplasmic side of the membrane. A helical membrane pass occupies residues 152-172 (LCGVVLASISSGLGEVTFLSL). The Lumenal portion of the chain corresponds to 173 to 182 (TAFYPSAVIS). A helical transmembrane segment spans residues 183-203 (WWSSGTGGAGLLGSLSYLGLT). At 204-277 (QAGLSPQHTL…DLSLQERWTV (74 aa)) the chain is on the cytoplasmic side. Residues 239-261 (PGGENEAETAARQPLIGTETPES) form a disordered region. Residues 242 to 244 (ENE) carry the Lysosomal targeting motif motif. Positions 253–254 (LI) match the Lysosomal targeting motif. Required for AP1G1, AP2A2 and AP3D1 interaction motif. Residues 278–298 (FKGLLWYIIPLVLVYFAEYFI) traverse the membrane as a helical segment. At 299 to 346 (NQGLFELLFFRNTSLSHAQQYRWYQMLYQAGVFASRSSLQCCRIRFTW) the chain is on the lumenal side. An N-linked (GlcNAc...) asparagine glycan is attached at N310. A helical transmembrane segment spans residues 347 to 367 (VLALLQCLNLALLLADVCLNF). Residues 368–438 (LPSIYLIFII…PLHDFLCHLP (71 aa)) are Cytoplasmic-facing. The Lysosomal targeting motif motif lies at 409–419 (MEAACISDTLG). C435 carries the post-translational modification Cysteine methyl ester. Residue C435 is the site of S-farnesyl cysteine attachment. Positions 436-438 (HLP) are cleaved as a propeptide — removed in mature form.

Belongs to the battenin family. Homooligomer. Interacts with DCTN1, KIF3A, RAB7A and RILP. Interacts with CLN5. Interacts with KCNIP3. Highly glycosylated. Post-translationally, farnesylation is important for trafficking to lysosomes. Expressed throughout the brain, such as, in the cerebral cortex, hippocampus, cerebellum and several different cerebral nuclei (at protein level). In the cerebral cortex, expressed in all cortical layers. In the hippocampus, expressed in the granule cells in the dentate gyrus and the pyramidal cells of the hippocampus proper. In the cerebellum expressed in the granular and molecular layers, and in the Purkinje cell layer.

Its subcellular location is the lysosome membrane. It is found in the late endosome. The protein localises to the lysosome. The protein resides in the membrane raft. It localises to the golgi apparatus. Its subcellular location is the trans-Golgi network. It is found in the synapse. The protein localises to the synaptosome. The protein resides in the early endosome membrane. It localises to the late endosome membrane. Its subcellular location is the cytoplasmic vesicle. It is found in the autophagosome. Functionally, mediates microtubule-dependent, anterograde transport connecting the Golgi network, endosomes, autophagosomes, lysosomes and plasma membrane, and participates in several cellular processes such as regulation of lysosomal pH, lysosome protein degradation, receptor-mediated endocytosis, autophagy, transport of proteins and lipids from the TGN, apoptosis and synaptic transmission. Facilitates the proteins transport from trans-Golgi network (TGN)-to other membrane compartments such as transport of microdomain-associated proteins to the plasma membrane, IGF2R transport to the lysosome where it regulates the CTSD release leading to regulation of CTSD maturation and thereby APP intracellular processing. Moreover regulates CTSD activity in response to osmotic stress. Also binds galactosylceramide and transports it from the trans Golgi to the rafts, which may have immediate and downstream effects on cell survival by modulating ceramide synthesis. At the plasma membrane, regulates actin-dependent events including filopodia formation, cell migration, and pinocytosis through ARF1-CDC42 pathway and also the cytoskeleton organization through interaction with MYH10 and fodrin leading to the regulation of the plasma membrane association of Na+, K+ ATPase complex. Regulates synaptic transmission in the amygdala, hippocampus, and cerebellum through regulation of synaptic vesicles density and their proximity to active zones leading to modulation of short-term plasticity and age-dependent anxious behavior, learning and memory. Regulates autophagic vacuoles (AVs) maturation by modulating the trafficking between endocytic and autophagolysosomal/lysosomal compartments, which involves vesicle fusion leading to regulation of degradation process. Also participates in cellular homeostasis of compounds such as, water, ions, amino acids, proteins and lipids in several tissue namely in brain and kidney through regulation of their transport and synthesis. The chain is Battenin from Mus musculus (Mouse).